The sequence spans 262 residues: Acyl-[acyl-carrier-protein]--UDP-N-acetylglucosamine O-acyltransferase (262 aa).

The protein belongs to the transferase hexapeptide repeat family. LpxA subfamily. Homotrimer.

Its subcellular location is the cytoplasm. It catalyses the reaction a (3R)-hydroxyacyl-[ACP] + UDP-N-acetyl-alpha-D-glucosamine = a UDP-3-O-[(3R)-3-hydroxyacyl]-N-acetyl-alpha-D-glucosamine + holo-[ACP]. The protein operates within glycolipid biosynthesis; lipid IV(A) biosynthesis; lipid IV(A) from (3R)-3-hydroxytetradecanoyl-[acyl-carrier-protein] and UDP-N-acetyl-alpha-D-glucosamine: step 1/6. Functionally, involved in the biosynthesis of lipid A, a phosphorylated glycolipid that anchors the lipopolysaccharide to the outer membrane of the cell. This chain is Acyl-[acyl-carrier-protein]--UDP-N-acetylglucosamine O-acyltransferase, found in Paraburkholderia phytofirmans (strain DSM 17436 / LMG 22146 / PsJN) (Burkholderia phytofirmans).